The chain runs to 503 residues: MRISPGEITKVLEDRIKEFKEEIDLQETGRVVQIGDGIARVYGLNSVMADELVEFVETGVKGLAFNLEEDNVGVILLGPYSQIKEGHIVKRLKKIIEVPVGEELLGRVVNPLGEPLDGLGPVEAKHTRKIEIKAPGVIYRRPVNTPLQTGIKAIDAMIPIGRGQRELIIGDRQTGKTAIAIDTIINQKGKGVYCIYVAIGQKTAAVARIVDKLREFGAMEYTTVVVASASDPAPIQYIAPYAGCAMGEYFMYNSKDALVVYDDLSKHAAAYRQLSLLLRRPPGREAYPGDIFYLHSRLLERAARLDDKMGGGSLTALPIVETQANDVSAYIPTNVISITDGQIYLEPGLFYSGFRPAINVGLSVSRVGGSAQIRAMKQVAGMLRIDLAQFRELETFAQFASELDPATRAQIVRGQHLQELLKQDQYSPLPVEEQVVVLYAGVRGYLDELPVESVRKFEKEFLDYMRTSKSSLLKLISEKKELTQEVEDELKKSIQEFLEGWHE.

170–177 (GDRQTGKT) contacts ATP.

This sequence belongs to the ATPase alpha/beta chains family. F-type ATPases have 2 components, CF(1) - the catalytic core - and CF(0) - the membrane proton channel. CF(1) has five subunits: alpha(3), beta(3), gamma(1), delta(1), epsilon(1). CF(0) has three main subunits: a(1), b(2) and c(9-12). The alpha and beta chains form an alternating ring which encloses part of the gamma chain. CF(1) is attached to CF(0) by a central stalk formed by the gamma and epsilon chains, while a peripheral stalk is formed by the delta and b chains.

The protein resides in the cell inner membrane. The catalysed reaction is ATP + H2O + 4 H(+)(in) = ADP + phosphate + 5 H(+)(out). Its function is as follows. Produces ATP from ADP in the presence of a proton gradient across the membrane. The alpha chain is a regulatory subunit. This Pseudothermotoga lettingae (strain ATCC BAA-301 / DSM 14385 / NBRC 107922 / TMO) (Thermotoga lettingae) protein is ATP synthase subunit alpha.